We begin with the raw amino-acid sequence, 161 residues long: Lipoprotein signal peptidase (161 aa).

A run of 4 helical transmembrane segments spans residues 11-31, 44-64, 66-86, and 100-120; these read PLFW…KLWV, LWSG…FSAF, GGAG…IIFA, and GCIL…GHVI. Catalysis depends on residues aspartate 121 and aspartate 137. The chain crosses the membrane as a helical span at residues 135–155; it reads LADVSINIGIAALLWASFFPV.

Belongs to the peptidase A8 family.

The protein localises to the cell inner membrane. It carries out the reaction Release of signal peptides from bacterial membrane prolipoproteins. Hydrolyzes -Xaa-Yaa-Zaa-|-(S,diacylglyceryl)Cys-, in which Xaa is hydrophobic (preferably Leu), and Yaa (Ala or Ser) and Zaa (Gly or Ala) have small, neutral side chains.. It participates in protein modification; lipoprotein biosynthesis (signal peptide cleavage). This protein specifically catalyzes the removal of signal peptides from prolipoproteins. The sequence is that of Lipoprotein signal peptidase from Synechocystis sp. (strain ATCC 27184 / PCC 6803 / Kazusa).